Consider the following 254-residue polypeptide: Urease accessory protein UreD (254 aa).

Belongs to the UreD family. As to quaternary structure, ureD, UreF and UreG form a complex that acts as a GTP-hydrolysis-dependent molecular chaperone, activating the urease apoprotein by helping to assemble the nickel containing metallocenter of UreC. The UreE protein probably delivers the nickel.

Its subcellular location is the cytoplasm. Its function is as follows. Required for maturation of urease via the functional incorporation of the urease nickel metallocenter. The chain is Urease accessory protein UreD from Streptomyces coelicolor (strain ATCC BAA-471 / A3(2) / M145).